The sequence spans 484 residues: Adenylosuccinate lyase (484 aa).

A2 is subject to N-acetylalanine. Substrate contacts are provided by residues R20–Y21, R85–D87, and T111–S112. K147 is modified (N6-acetyllysine). The active-site Proton donor/acceptor is the H159. Substrate is bound at residue Q241. S289 functions as the Proton donor/acceptor in the catalytic mechanism. An N6-acetyllysine modification is found at K295. 4 residues coordinate substrate: R303, R329, S334, and R338. K415 participates in a covalent cross-link: Glycyl lysine isopeptide (Lys-Gly) (interchain with G-Cter in SUMO1).

Belongs to the lyase 1 family. Adenylosuccinate lyase subfamily. In terms of assembly, homotetramer. Residues from neighboring subunits contribute catalytic and substrate-binding residues to each active site.

It carries out the reaction N(6)-(1,2-dicarboxyethyl)-AMP = fumarate + AMP. The catalysed reaction is (2S)-2-[5-amino-1-(5-phospho-beta-D-ribosyl)imidazole-4-carboxamido]succinate = 5-amino-1-(5-phospho-beta-D-ribosyl)imidazole-4-carboxamide + fumarate. It functions in the pathway purine metabolism; AMP biosynthesis via de novo pathway; AMP from IMP: step 2/2. The protein operates within purine metabolism; IMP biosynthesis via de novo pathway; 5-amino-1-(5-phospho-D-ribosyl)imidazole-4-carboxamide from 5-amino-1-(5-phospho-D-ribosyl)imidazole-4-carboxylate: step 2/2. Functionally, catalyzes two non-sequential steps in de novo AMP synthesis: converts (S)-2-(5-amino-1-(5-phospho-D-ribosyl)imidazole-4-carboxamido)succinate (SAICAR) to fumarate plus 5-amino-1-(5-phospho-D-ribosyl)imidazole-4-carboxamide, and thereby also contributes to de novo IMP synthesis, and converts succinyladenosine monophosphate (SAMP) to AMP and fumarate. In Mus musculus (Mouse), this protein is Adenylosuccinate lyase (Adsl).